Here is a 353-residue protein sequence, read N- to C-terminus: Terpene synthase 3 (353 aa).

Positions 118, 261, and 269 each coordinate Mg(2+). Residues 118–122 (DDLLE) carry the D(D/E)XX(D/E) motif motif. The NSE motif motif lies at 261–269 (NDTFLLKKE). A WxxxxxRY motif motif is present at residues 342-349 (WCSKTTRY).

The protein belongs to the terpene synthase family. Mg(2+) is required as a cofactor.

Terpene synthase that may be involved in the production of volatile terpenoids. Does not show detectable terpene products with either farnesyl diphosphate (FPP) or geranyl diphosphate (GPP). P.polycephalum has a unique biology and these volatile terpenoids could function in internal communication of P.polycephalum, to mark the territory that have been explored, or they may be involved in chemotaxis. The protein is Terpene synthase 3 of Physarum polycephalum (Slime mold).